A 106-amino-acid polypeptide reads, in one-letter code: U1-lycotoxin-Ls1z (106 aa).

Positions 1–19 (MKVLVVVALLVTLISYSSS) are cleaved as a signal peptide. A propeptide spanning residues 20–40 (EGIDDLEADELLSLMANEQTR) is cleaved from the precursor. 4 disulfides stabilise this stretch: cysteine 43/cysteine 58, cysteine 50/cysteine 67, cysteine 57/cysteine 85, and cysteine 69/cysteine 83.

The protein belongs to the neurotoxin 19 (CSTX) family. 03 subfamily. Expressed by the venom gland.

It is found in the secreted. This is U1-lycotoxin-Ls1z from Lycosa singoriensis (Wolf spider).